We begin with the raw amino-acid sequence, 313 residues long: Porphobilinogen deaminase (313 aa).

Residue cysteine 242 is modified to S-(dipyrrolylmethanemethyl)cysteine.

It belongs to the HMBS family. In terms of assembly, monomer. Requires dipyrromethane as cofactor.

It carries out the reaction 4 porphobilinogen + H2O = hydroxymethylbilane + 4 NH4(+). The protein operates within porphyrin-containing compound metabolism; protoporphyrin-IX biosynthesis; coproporphyrinogen-III from 5-aminolevulinate: step 2/4. In terms of biological role, tetrapolymerization of the monopyrrole PBG into the hydroxymethylbilane pre-uroporphyrinogen in several discrete steps. This chain is Porphobilinogen deaminase, found in Yersinia pseudotuberculosis serotype O:3 (strain YPIII).